A 536-amino-acid polypeptide reads, in one-letter code: Glycine--tRNA ligase (536 aa).

Residues 56–67 (LVSPAGAPSTFE) are insert. The substrate site is built by Arg-106 and Glu-213. ATP is bound by residues 245–247 (RNE), 255–260 (FRSREF), and 333–334 (EL). 260–264 (FEQME) contacts substrate. The segment at 350 to 372 (EGKLDPATNPMTVELNEHGKPKH) is insert. 396 to 400 (EPSAG) is a substrate binding site. 400 to 403 (GADR) provides a ligand contact to ATP.

It belongs to the class-II aminoacyl-tRNA synthetase family. Homodimer.

It localises to the cytoplasm. The catalysed reaction is tRNA(Gly) + glycine + ATP = glycyl-tRNA(Gly) + AMP + diphosphate. Functionally, catalyzes the attachment of glycine to tRNA(Gly). This is Glycine--tRNA ligase from Rhodopirellula baltica (strain DSM 10527 / NCIMB 13988 / SH1).